Consider the following 393-residue polypeptide: Messenger RNA-binding inhibitor of apoptosis 1 (393 aa).

The interval 12-76 (ELYIPQKMKA…EKILRDVWRK (65 aa)) is KH 1-like. The interval 79–157 (VQIMIREAAL…MMIECLTEHF (79 aa)) is KH 2-like. The interval 259 to 322 (EKIKQWIPTT…NKEQCQEARN (64 aa)) is KH 3-like. Residues 328-393 (MQSHQDKPAS…LTPRKLSPSD (66 aa)) are disordered. Over residues 345-359 (STPGSPFTSDSSSTT) the composition is skewed to low complexity.

May interact with wago-4. As to expression, expressed throughout the germline and in oocytes (at protein level).

It localises to the cytoplasm. The protein localises to the perinuclear region. Its function is as follows. RNA-binding protein which binds to its own mRNA and target mRNAs to negatively regulate gene expression to modulate apoptosis and differentiation in the germline. Negatively regulates the expression of the argonaute protein wago-4, and may thus play a role in RNA-mediated gene silencing (RNAi) in the germline. In Caenorhabditis elegans, this protein is Messenger RNA-binding inhibitor of apoptosis 1.